A 244-amino-acid chain; its full sequence is Secreted RxLR effector protein RXLR-C05 (244 aa).

The N-terminal stretch at 1–21 (MRGAFYVATAFLIASSTRTAA) is a signal peptide. Over residues 37–46 (LPVGDSDTKS) the composition is skewed to basic and acidic residues. The tract at residues 37–56 (LPVGDSDTKSLPRRSLKGSG) is disordered. A RxLR-dEER motif is present at residues 50-68 (RSLKGSGDRLEIPVAEEER).

The protein belongs to the RxLR effector family.

The protein localises to the secreted. The protein resides in the host cytoplasm. It localises to the host nucleus. Secreted effector that suppresses pattern-triggered immunity (PTI) in plant host. In Plasmopara halstedii (Downy mildew of sunflower), this protein is Secreted RxLR effector protein RXLR-C05.